The sequence spans 246 residues: 23S rRNA (guanosine-2'-O-)-methyltransferase RlmB (246 aa).

The S-adenosyl-L-methionine site is built by glycine 198, isoleucine 218, and leucine 227.

It belongs to the class IV-like SAM-binding methyltransferase superfamily. RNA methyltransferase TrmH family. RlmB subfamily.

It is found in the cytoplasm. It catalyses the reaction guanosine(2251) in 23S rRNA + S-adenosyl-L-methionine = 2'-O-methylguanosine(2251) in 23S rRNA + S-adenosyl-L-homocysteine + H(+). In terms of biological role, specifically methylates the ribose of guanosine 2251 in 23S rRNA. This Shewanella oneidensis (strain ATCC 700550 / JCM 31522 / CIP 106686 / LMG 19005 / NCIMB 14063 / MR-1) protein is 23S rRNA (guanosine-2'-O-)-methyltransferase RlmB.